The following is a 769-amino-acid chain: Protein transport protein sec39 (769 aa).

Belongs to the SEC39 family. In terms of assembly, component of a peripheral membrane protein complex consisting of dsl1, sec39 and tip20.

It is found in the endoplasmic reticulum membrane. In terms of biological role, required for protein transport between the Golgi and the endoplasmic reticulum. May contribute to tethering of coatomer-coated retrograde transport vesicles to the ER membrane through interaction with and stabilization of the SNARE complex. This chain is Protein transport protein sec39, found in Schizosaccharomyces pombe (strain 972 / ATCC 24843) (Fission yeast).